Reading from the N-terminus, the 282-residue chain is Pantothenate synthetase (282 aa).

Residue 30–37 (MGYLHEGH) participates in ATP binding. The active-site Proton donor is histidine 37. A (R)-pantoate-binding site is contributed by glutamine 61. Residue glutamine 61 participates in beta-alanine binding. 148–151 (GQKD) lines the ATP pocket. Glutamine 154 lines the (R)-pantoate pocket. Residues valine 177 and 185–188 (MSSR) contribute to the ATP site.

This sequence belongs to the pantothenate synthetase family. In terms of assembly, homodimer.

The protein resides in the cytoplasm. The enzyme catalyses (R)-pantoate + beta-alanine + ATP = (R)-pantothenate + AMP + diphosphate + H(+). Its pathway is cofactor biosynthesis; (R)-pantothenate biosynthesis; (R)-pantothenate from (R)-pantoate and beta-alanine: step 1/1. Its function is as follows. Catalyzes the condensation of pantoate with beta-alanine in an ATP-dependent reaction via a pantoyl-adenylate intermediate. This is Pantothenate synthetase from Syntrophomonas wolfei subsp. wolfei (strain DSM 2245B / Goettingen).